A 527-amino-acid chain; its full sequence is FHA domain-containing protein FhaA (527 aa).

Thr116 carries the phosphothreonine modification. The segment at 119-426 (FRARGTVNPD…APGGYSGYGQ (308 aa)) is disordered. Basic and acidic residues predominate over residues 170 to 188 (RPDEYYDDRYARPQEDPRG). Low complexity-rich tracts occupy residues 199–209 (RGGYPPETGGY) and 256–266 (YQDQGRGYPDQ). The span at 271-283 (YPPPYEQRPPVSP) shows a compositional bias: pro residues. The segment covering 284-299 (GPAAGYGAPGYDQGYR) has biased composition (low complexity). A compositionally biased stretch (gly residues) spans 300–322 (QSGGYGPSPGGGQPGYGGYGEYG). Positions 345–366 (RPAYPDQGGYDQGYQQGATTYG) are enriched in low complexity. The region spanning 455-504 (NIIGRGQDAQFRLPDTGVSRRHLEIRWDGQVALLADLNSTNGTTVNNAPV) is the FHA domain.

As to quaternary structure, interacts with (phosphorylated) MviN and (phosphorylated) PknB via the FHA domain. Binds to the PknB juxtamembrane domain with an affinity that is modulated by the degree and the pattern of phosphorylation of this juxtamembrane domain. Phosphorylated by PknB.

It localises to the cytoplasm. Functionally, regulates cell growth and peptidoglycan synthesis by binding to MviN. May inhibit the late stages of peptidoglycan synthesis. The protein is FHA domain-containing protein FhaA (fhaA) of Mycobacterium tuberculosis (strain ATCC 25618 / H37Rv).